Consider the following 287-residue polypeptide: NAD kinase (287 aa).

Catalysis depends on D66, which acts as the Proton acceptor. Residues 66 to 67 (DG), 137 to 138 (ND), R148, R165, D167, and 178 to 183 (TAYSMS) contribute to the NAD(+) site.

Belongs to the NAD kinase family. A divalent metal cation is required as a cofactor.

The protein resides in the cytoplasm. The catalysed reaction is NAD(+) + ATP = ADP + NADP(+) + H(+). Involved in the regulation of the intracellular balance of NAD and NADP, and is a key enzyme in the biosynthesis of NADP. Catalyzes specifically the phosphorylation on 2'-hydroxyl of the adenosine moiety of NAD to yield NADP. The protein is NAD kinase of Chlorobium limicola (strain DSM 245 / NBRC 103803 / 6330).